A 361-amino-acid polypeptide reads, in one-letter code: 3-dehydroquinate synthase (361 aa).

Residues 72–77 (SGEKEK), 130–131 (TT), Lys142, and Lys151 each bind NAD(+). Residues Glu184, His247, and His264 each coordinate Zn(2+).

Belongs to the sugar phosphate cyclases superfamily. Dehydroquinate synthase family. Co(2+) serves as cofactor. The cofactor is Zn(2+). It depends on NAD(+) as a cofactor.

The protein resides in the cytoplasm. The enzyme catalyses 7-phospho-2-dehydro-3-deoxy-D-arabino-heptonate = 3-dehydroquinate + phosphate. It participates in metabolic intermediate biosynthesis; chorismate biosynthesis; chorismate from D-erythrose 4-phosphate and phosphoenolpyruvate: step 2/7. Functionally, catalyzes the conversion of 3-deoxy-D-arabino-heptulosonate 7-phosphate (DAHP) to dehydroquinate (DHQ). The chain is 3-dehydroquinate synthase from Bacillus cereus (strain B4264).